We begin with the raw amino-acid sequence, 432 residues long: Sonic hedgehog protein (432 aa).

Residues 1 to 26 (MDEMILLRRVLLAGFICALLVPSGLS) form the signal peptide. A lipid anchor (N-palmitoyl cysteine) is attached at C27. The Cardin-Weintraub signature appears at 35–41 (TRKRFKK). Ca(2+) is bound by residues E92, E93, D98, T128, E129, D132, and D134. Residues H143, D150, and H185 each contribute to the Zn(2+) site. Residue G200 is the site of Cholesterol glycine ester attachment.

This sequence belongs to the hedgehog family. Interacts with HHATL/GUP1 which negatively regulates HHAT-mediated palmitoylation of the SHH N-terminus. Interacts with BOC and CDON. Interacts with HHIP. Interacts with DISP1 via its cholesterol anchor. Interacts with SCUBE2. In terms of assembly, multimer. Post-translationally, the C-terminal domain displays an autoproteolysis activity and a cholesterol transferase activity. Both activities result in the cleavage of the full-length protein and covalent attachment of a cholesterol moiety to the C-terminal of the newly generated N-terminal fragment (ShhN). Cholesterylation is required for the sonic hedgehog protein N-product targeting to lipid rafts and multimerization. ShhN is the active species in both local and long-range signaling, whereas the C-product (ShhC) is degraded in the reticulum endoplasmic. In terms of processing, N-palmitoylation by HHAT of ShhN is required for sonic hedgehog protein N-product multimerization and full activity. It is a prerequisite for the membrane-proximal positioning and the subsequent shedding of this N-terminal peptide. The lipidated N- and C-terminal peptides of ShhNp can be cleaved (shedding). The N-terminal palmitoylated peptide is cleaved at the Cardin-Weintraub (CW) motif site. The cleavage reduced the interactions with heparan sulfate. The cleavage is enhanced by SCUBE2.

It is found in the endoplasmic reticulum membrane. The protein resides in the golgi apparatus membrane. The protein localises to the cell membrane. The enzyme catalyses glycyl-L-cysteinyl-[protein] + cholesterol + H(+) = [protein]-C-terminal glycyl cholesterol ester + N-terminal L-cysteinyl-[protein]. Functionally, the C-terminal part of the sonic hedgehog protein precursor displays an autoproteolysis and a cholesterol transferase activity. Both activities result in the cleavage of the full-length protein into two parts (ShhN and ShhC) followed by the covalent attachment of a cholesterol moiety to the C-terminal of the newly generated ShhN. Both activities occur in the endoplasmic reticulum. Once cleaved, ShhC is degraded in the endoplasmic reticulum. Its function is as follows. The dually lipidated sonic hedgehog protein N-product (ShhNp) is a morphogen which is essential for a variety of patterning events during development. Induces ventral cell fate in the neural tube and somites. Involved in the patterning of the anterior-posterior axis of the developing limb bud. Essential for axon guidance. Binds to the patched (PTCH1) receptor, which functions in association with smoothened (SMO), to activate the transcription of target genes. In the absence of SHH, PTCH1 represses the constitutive signaling activity of SMO. This Cynops pyrrhogaster (Japanese fire-bellied newt) protein is Sonic hedgehog protein.